Here is a 552-residue protein sequence, read N- to C-terminus: DNA ligase (552 aa).

E244 serves as a coordination point for ATP. K246 (N6-AMP-lysine intermediate) is an active-site residue. ATP is bound by residues R251, R266, E296, F336, R408, and K414.

It belongs to the ATP-dependent DNA ligase family. The cofactor is Mg(2+).

The enzyme catalyses ATP + (deoxyribonucleotide)n-3'-hydroxyl + 5'-phospho-(deoxyribonucleotide)m = (deoxyribonucleotide)n+m + AMP + diphosphate.. Its function is as follows. DNA ligase that seals nicks in double-stranded DNA during DNA replication, DNA recombination and DNA repair. This Methanothrix thermoacetophila (strain DSM 6194 / JCM 14653 / NBRC 101360 / PT) (Methanosaeta thermophila) protein is DNA ligase.